The following is a 212-amino-acid chain: Protein-L-isoaspartate O-methyltransferase (212 aa).

The active site involves Ser60.

Belongs to the methyltransferase superfamily. L-isoaspartyl/D-aspartyl protein methyltransferase family.

Its subcellular location is the cytoplasm. The enzyme catalyses [protein]-L-isoaspartate + S-adenosyl-L-methionine = [protein]-L-isoaspartate alpha-methyl ester + S-adenosyl-L-homocysteine. In terms of biological role, catalyzes the methyl esterification of L-isoaspartyl residues in peptides and proteins that result from spontaneous decomposition of normal L-aspartyl and L-asparaginyl residues. It plays a role in the repair and/or degradation of damaged proteins. The polypeptide is Protein-L-isoaspartate O-methyltransferase (Methanococcus maripaludis (strain C6 / ATCC BAA-1332)).